Reading from the N-terminus, the 553-residue chain is Arginine--tRNA ligase (553 aa).

A 'HIGH' region motif is present at residues 122 to 132; the sequence is ANPTGFLHVGH.

It belongs to the class-I aminoacyl-tRNA synthetase family. Monomer.

The protein resides in the cytoplasm. The enzyme catalyses tRNA(Arg) + L-arginine + ATP = L-arginyl-tRNA(Arg) + AMP + diphosphate. The polypeptide is Arginine--tRNA ligase (Mesoplasma florum (strain ATCC 33453 / NBRC 100688 / NCTC 11704 / L1) (Acholeplasma florum)).